We begin with the raw amino-acid sequence, 688 residues long: Elongation factor G (688 aa).

The tr-type G domain occupies Glu8–Leu282. Residues Ala17–Thr24, Asp81–His85, and Asn135–Asp138 each bind GTP.

Belongs to the TRAFAC class translation factor GTPase superfamily. Classic translation factor GTPase family. EF-G/EF-2 subfamily.

It is found in the cytoplasm. In terms of biological role, catalyzes the GTP-dependent ribosomal translocation step during translation elongation. During this step, the ribosome changes from the pre-translocational (PRE) to the post-translocational (POST) state as the newly formed A-site-bound peptidyl-tRNA and P-site-bound deacylated tRNA move to the P and E sites, respectively. Catalyzes the coordinated movement of the two tRNA molecules, the mRNA and conformational changes in the ribosome. The polypeptide is Elongation factor G (Clostridium perfringens (strain 13 / Type A)).